The chain runs to 449 residues: Phosphoglucosamine mutase (449 aa).

The active-site Phosphoserine intermediate is Ser101. 4 residues coordinate Mg(2+): Ser101, Asp241, Asp243, and Asp245. Ser101 carries the post-translational modification Phosphoserine.

Belongs to the phosphohexose mutase family. Mg(2+) is required as a cofactor. In terms of processing, activated by phosphorylation.

The enzyme catalyses alpha-D-glucosamine 1-phosphate = D-glucosamine 6-phosphate. Its function is as follows. Catalyzes the conversion of glucosamine-6-phosphate to glucosamine-1-phosphate. The chain is Phosphoglucosamine mutase from Ruminiclostridium cellulolyticum (strain ATCC 35319 / DSM 5812 / JCM 6584 / H10) (Clostridium cellulolyticum).